The sequence spans 188 residues: Elongation factor P (188 aa).

This sequence belongs to the elongation factor P family.

The protein resides in the cytoplasm. It functions in the pathway protein biosynthesis; polypeptide chain elongation. In terms of biological role, involved in peptide bond synthesis. Stimulates efficient translation and peptide-bond synthesis on native or reconstituted 70S ribosomes in vitro. Probably functions indirectly by altering the affinity of the ribosome for aminoacyl-tRNA, thus increasing their reactivity as acceptors for peptidyl transferase. The chain is Elongation factor P from Bradyrhizobium sp. (strain BTAi1 / ATCC BAA-1182).